The chain runs to 373 residues: tRNA-specific 2-thiouridylase MnmA (373 aa).

ATP is bound by residues 12–19 (GMSGGVDS) and methionine 38. The segment at 98–100 (NPD) is interaction with target base in tRNA. Residue cysteine 103 is the Nucleophile of the active site. Cysteine 103 and cysteine 200 are joined by a disulfide. Glycine 127 provides a ligand contact to ATP. The interval 150 to 152 (KDQ) is interaction with tRNA. Cysteine 200 serves as the catalytic Cysteine persulfide intermediate. Residues 312–313 (RY) form an interaction with tRNA region.

Belongs to the MnmA/TRMU family.

Its subcellular location is the cytoplasm. The catalysed reaction is S-sulfanyl-L-cysteinyl-[protein] + uridine(34) in tRNA + AH2 + ATP = 2-thiouridine(34) in tRNA + L-cysteinyl-[protein] + A + AMP + diphosphate + H(+). Functionally, catalyzes the 2-thiolation of uridine at the wobble position (U34) of tRNA, leading to the formation of s(2)U34. This chain is tRNA-specific 2-thiouridylase MnmA, found in Streptococcus pneumoniae serotype 19F (strain G54).